The following is an 866-amino-acid chain: MQEKYHPQEIESEAQQYWQQTAAFKAVEAPEKRKYYCLSMFPYPSGKLHMGHVRNYTIGDVLSRYHRMQGYNVLQPMGWDAFGLPAENAAMQNNVPPAKWTYDNIAYMRKQLQSLGLAMDWDRELATCQPDYYRWNQWLFLRMLEKGLAYRTTGIVNWDPVDQTVLANEQVIDGRGWRTGALVEKHEIPMYYMKITAYADELLEALNALPGWPERVRTMQANWIGKSFGVEVRFPADAESGMPQDLKVFTTRADTLFGVTYVAVAAEHPVAQHAAKSNPALAAFIEECRQGAMMEAELATQEKKGRDTGLYVIHPLTGARLPVWIANYVLMGYGEGAVMAVPAHDERDFEFATQYSLPIRAVIKPVDSGLTVPLAQAYVEHGITFDSGEFSGLAFQPAVDAIAVALQQKGLGEKRVHYRLRDWGISRQRYWGCPIPLIYCDACGVVPVPDEQLPVVLPEDLVPDGSGNPLAKTPSFYECSCPRCGQSARRETDTMDTFVDSSWYYIRYACTDQHRAMVDARVDYWLPVDQYIGGIEHAILHLLYSRFWSKVMRDLGLVLFDEPFANLLTQGMVLNEIMFRKTGSGRIVYFNPADVDIQTDEQGRRIGAVLRADGQPVEAGGIGTMSKSRNNGVDPQKLVEQYGADTARLFMMFASPPEQTLEWADAGVEGAFRFLKRLWKQVYDHLQQSGVANGPIPVAGLGPELKALRFQLHQTIAKVGDDLGRRHTFNTAIAAVMELMNALGKLQDSSPSARGLMQEALENIVLLLSPIVPHICHVLWRELRPGTELLDQPWPQADVAALVQDEIELIVQVNGKLRGKIRVAADTKPVIVEQLALENEQVRRFIDGKAVKKVVMVPGKLVNIVI.

Positions 42 to 52 match the 'HIGH' region motif; that stretch reads PYPSGKLHMGH. The 'KMSKS' region motif lies at 624–628; the sequence is TMSKS. An ATP-binding site is contributed by Lys-627.

Belongs to the class-I aminoacyl-tRNA synthetase family.

The protein resides in the cytoplasm. It carries out the reaction tRNA(Leu) + L-leucine + ATP = L-leucyl-tRNA(Leu) + AMP + diphosphate. In Nitrosospira multiformis (strain ATCC 25196 / NCIMB 11849 / C 71), this protein is Leucine--tRNA ligase.